A 1001-amino-acid polypeptide reads, in one-letter code: Translation initiation factor IF-2 (1001 aa).

Residues 56–418 form a disordered region; sequence PDYVHDPNAV…VEAGPPPISR (363 aa). A compositionally biased stretch (basic and acidic residues) spans 70 to 84; it reads TEAHEERHEHEEAHE. Residues 85-108 show a composition bias toward low complexity; that stretch reads PAAAPKAAVEPETPVAPAPEAAPA. Residues 109 to 120 are compositionally biased toward basic and acidic residues; the sequence is AKEERPAPEEPA. Composition is skewed to pro residues over residues 136–170, 180–194, 204–217, 229–252, 305–322, and 345–357; these read IHPP…PHAP, PARP…PSQT, RPAP…PTTT, QPFP…PPQQ, PAAP…PVPG, and GMPP…PRPQ. Positions 379–410 are enriched in basic and acidic residues; that stretch reads SRGRPGDRRPVRQQRERTEEEKILRPQRRHVE. Residues 499-668 enclose the tr-type G domain; sequence RRAPVVTIMG…LLVADMQDLK (170 aa). Residues 508 to 515 are G1; it reads GHVDHGKT. 508-515 contacts GTP; sequence GHVDHGKT. Positions 533–537 are G2; the sequence is GITQH. Residues 554–557 are G3; the sequence is DTPG. GTP is bound by residues 554 to 558 and 608 to 611; these read DTPGH and NKID. Residues 608–611 form a G4 region; it reads NKID. Residues 644–646 form a G5 region; that stretch reads SAR.

It belongs to the TRAFAC class translation factor GTPase superfamily. Classic translation factor GTPase family. IF-2 subfamily.

The protein resides in the cytoplasm. Functionally, one of the essential components for the initiation of protein synthesis. Protects formylmethionyl-tRNA from spontaneous hydrolysis and promotes its binding to the 30S ribosomal subunits. Also involved in the hydrolysis of GTP during the formation of the 70S ribosomal complex. The protein is Translation initiation factor IF-2 of Solibacter usitatus (strain Ellin6076).